A 112-amino-acid polypeptide reads, in one-letter code: Probable 4-amino-4-deoxy-L-arabinose-phosphoundecaprenol flippase subunit ArnE (112 aa).

Residues 35 to 110 (RHILFWLGMA…IVVGIVILGT (76 aa)) enclose the EamA domain. 3 helical membrane-spanning segments follow: residues 37–57 (ILFW…LWLS), 66–86 (IAYP…WGIW), and 89–109 (PVAR…VILG).

Belongs to the ArnE family. As to quaternary structure, heterodimer of ArnE and ArnF.

The protein localises to the cell inner membrane. It functions in the pathway bacterial outer membrane biogenesis; lipopolysaccharide biosynthesis. In terms of biological role, translocates 4-amino-4-deoxy-L-arabinose-phosphoundecaprenol (alpha-L-Ara4N-phosphoundecaprenol) from the cytoplasmic to the periplasmic side of the inner membrane. The sequence is that of Probable 4-amino-4-deoxy-L-arabinose-phosphoundecaprenol flippase subunit ArnE from Klebsiella pneumoniae (strain 342).